The primary structure comprises 167 residues: Ribosome maturation factor RimM (167 aa).

The 75-residue stretch at 92–166 (DDEFYHTDLI…RIVADPPEGL (75 aa)) folds into the PRC barrel domain.

The protein belongs to the RimM family. In terms of assembly, binds ribosomal protein uS19.

It is found in the cytoplasm. Its function is as follows. An accessory protein needed during the final step in the assembly of 30S ribosomal subunit, possibly for assembly of the head region. Essential for efficient processing of 16S rRNA. May be needed both before and after RbfA during the maturation of 16S rRNA. It has affinity for free ribosomal 30S subunits but not for 70S ribosomes. This Ruegeria pomeroyi (strain ATCC 700808 / DSM 15171 / DSS-3) (Silicibacter pomeroyi) protein is Ribosome maturation factor RimM.